We begin with the raw amino-acid sequence, 114 residues long: Iron-sulfur cluster assembly protein CyaY (114 aa).

This sequence belongs to the frataxin family.

Functionally, involved in iron-sulfur (Fe-S) cluster assembly. May act as a regulator of Fe-S biogenesis. The protein is Iron-sulfur cluster assembly protein CyaY of Ralstonia pickettii (strain 12J).